A 595-amino-acid chain; its full sequence is NAD-dependent protein deacetylase hst4 (595 aa).

Residues 1 to 106 (MAPRKTKPAT…HLDLTPRLGF (106 aa)) are disordered. Residues 9–32 (ATKPAAKPTPASTATTSSCPSPKS) show a composition bias toward low complexity. Positions 109–428 (YGDQEPQLNL…SADVERVKNE (320 aa)) constitute a Deacetylase sirtuin-type domain. Residues 134–153 (GAGI…DGLF) and 222–225 (QNID) each bind NAD(+). His253 serves as the catalytic Proton acceptor. Zn(2+) is bound by residues Cys261, Cys264, Cys283, and Cys286. NAD(+) contacts are provided by residues 342-344 (GTS), 373-375 (NNE), and Cys394. The segment covering 445–473 (QAQTGMLTPSSSYDGDVENASTTTLSNPA) has biased composition (polar residues). The interval 445–595 (QAQTGMLTPS…IPKGMGKLLD (151 aa)) is disordered. Composition is skewed to basic and acidic residues over residues 478–492 (KLTE…DAPK) and 530–543 (TPEE…EHKA).

The protein belongs to the sirtuin family. Class I subfamily. It depends on Zn(2+) as a cofactor.

It localises to the nucleus. It carries out the reaction N(6)-acetyl-L-lysyl-[protein] + NAD(+) + H2O = 2''-O-acetyl-ADP-D-ribose + nicotinamide + L-lysyl-[protein]. Its function is as follows. NAD-dependent histone deacetylase, which could function in telomeric silencing, cell cycle progression and chromosome stability. In Emericella nidulans (strain FGSC A4 / ATCC 38163 / CBS 112.46 / NRRL 194 / M139) (Aspergillus nidulans), this protein is NAD-dependent protein deacetylase hst4.